The chain runs to 405 residues: Tyrosine--tRNA ligase (405 aa).

Positions 48–57 (PTAPDLHLGH) match the 'HIGH' region motif. The 'KMSKS' region signature appears at 232–236 (KMSKS). Position 235 (Lys-235) interacts with ATP. Positions 343–404 (IWLPKLLADA…GKRRFVKVIF (62 aa)) constitute an S4 RNA-binding domain.

It belongs to the class-I aminoacyl-tRNA synthetase family. TyrS type 2 subfamily. In terms of assembly, homodimer.

The protein resides in the cytoplasm. The catalysed reaction is tRNA(Tyr) + L-tyrosine + ATP = L-tyrosyl-tRNA(Tyr) + AMP + diphosphate + H(+). Catalyzes the attachment of tyrosine to tRNA(Tyr) in a two-step reaction: tyrosine is first activated by ATP to form Tyr-AMP and then transferred to the acceptor end of tRNA(Tyr). The protein is Tyrosine--tRNA ligase of Desulfotalea psychrophila (strain LSv54 / DSM 12343).